We begin with the raw amino-acid sequence, 384 residues long: MKPQQLATQKFSEHCGYSAAQTVFAPGRVNIIGEHTDYNDGFVMPCAINYGMAVSFSKRDDSVWRVYAIDIDEQDEFDLSRPIEPSEHKWANYVRGVVKYIQEKCPEFKQGADLAMTSDVPMSSGLSSSAALEISIGKTARVLGDLPLSLTEIALIGQQAENKFVGANCGNMDQLTSALGQKDQVIMIDCRSLDITPTPVPHGYSIAIINSNVKHDLVTGEYNSRRQECEFAARFFGVKALRDVTSERFIERAAELQAQNELAYKRAKHIISENQRVLEAVEALKANDMVKLGQLMAGSHDSMRDDFEITIPEIDYLVELAQVAIGKNGGARMTGGGFGGCIVCLVPDEKVEHLRRIIADNYEKQTGIKETFHLCTACDGVHLI.

34–37 (EHTD) contributes to the substrate binding site. ATP is bound at residue 123 to 129 (SSGLSSS). Residues S129 and E161 each coordinate Mg(2+). Residue D173 is the Proton acceptor of the active site. Y222 is a substrate binding site.

This sequence belongs to the GHMP kinase family. GalK subfamily.

The protein localises to the cytoplasm. It catalyses the reaction alpha-D-galactose + ATP = alpha-D-galactose 1-phosphate + ADP + H(+). It functions in the pathway carbohydrate metabolism; galactose metabolism. Its function is as follows. Catalyzes the transfer of the gamma-phosphate of ATP to D-galactose to form alpha-D-galactose-1-phosphate (Gal-1-P). This Actinobacillus pleuropneumoniae (Haemophilus pleuropneumoniae) protein is Galactokinase.